A 342-amino-acid polypeptide reads, in one-letter code: Aristolochene synthase (342 aa).

Mg(2+) is bound by residues Asp115, Asn244, Ser248, and Glu252. (2E,6E)-farnesyl diphosphate-binding residues include Arg340 and Tyr341.

Belongs to the terpene synthase family. As to quaternary structure, homodimer. It depends on Mg(2+) as a cofactor.

The enzyme catalyses (2E,6E)-farnesyl diphosphate = (+)-aristolochene + diphosphate. It participates in sesquiterpene biosynthesis; aristolochene biosynthesis; aristolochene from farnesyl diphosphate: step 1/1. In terms of biological role, aristolochene synthase; part of the gene cluster that mediates the biosynthesis of PR-toxin, a bicyclic sesquiterpene belonging to the eremophilane class and acting as a mycotoxin. The first step of the pathway is catalyzed by the aristolochene synthase which performs the cyclization of trans,trans-farnesyl diphosphate (FPP) to the bicyclic sesquiterpene aristolochene. Following the formation of aristolochene, the non-oxygenated aristolochene is converted to the trioxygenated intermediate eremofortin B, via 7-epi-neopetasone. This conversion appears to involve three enzymes, a hydroxysterol oxidase-like enzyme, the quinone-oxidase prx3 that forms the quinone-type-structure in the bicyclic nucleus of aristolochene with the C8-oxo group and the C-3 hydroxyl group, and the P450 monooxygenase ORF6 that introduces the epoxide at the double bond between carbons 1 and 2. No monoxy or dioxy-intermediates have been reported to be released to the broth, so these three early oxidative reactions may be coupled together. Eremofortin B is further oxidized by another P450 monooxygenase, that introduces a second epoxide between carbons 7 and 11 prior to acetylation to eremofortin A by the acetyltransferase ORF8. The second epoxidation may be performed by a second P450 monooxygenase. After the acetylation step, eremofortin A is converted to eremofortin C and then to PR-toxin. First the conversion of eremofortin A to eremofortin C proceeds by oxidation of the side chain of the molecule at C-12 and is catalyzed by the short-chain oxidoreductase prx1. The cytochrome P450 monooxygenase ORF5 also plays a role in this step. The primary alcohol formed at C-12 is finally oxidized by the short-chain alcohol dehydrogenase prx4 that forms PR-toxin. This is Aristolochene synthase from Penicillium roqueforti (strain FM164).